Reading from the N-terminus, the 488-residue chain is 3-octaprenyl-4-hydroxybenzoate carboxy-lyase (488 aa).

Asn172 is a binding site for Mn(2+). Prenylated FMN contacts are provided by residues 175 to 177 (IYR), 189 to 191 (RWL), and 194 to 195 (RG). Glu238 contacts Mn(2+). The Proton donor role is filled by Asp287.

This sequence belongs to the UbiD family. Homohexamer. Prenylated FMN serves as cofactor. It depends on Mn(2+) as a cofactor.

It localises to the cell membrane. It carries out the reaction a 4-hydroxy-3-(all-trans-polyprenyl)benzoate + H(+) = a 2-(all-trans-polyprenyl)phenol + CO2. It participates in cofactor biosynthesis; ubiquinone biosynthesis. In terms of biological role, catalyzes the decarboxylation of 3-octaprenyl-4-hydroxy benzoate to 2-octaprenylphenol, an intermediate step in ubiquinone biosynthesis. The polypeptide is 3-octaprenyl-4-hydroxybenzoate carboxy-lyase (Shewanella oneidensis (strain ATCC 700550 / JCM 31522 / CIP 106686 / LMG 19005 / NCIMB 14063 / MR-1)).